A 523-amino-acid polypeptide reads, in one-letter code: Ribonuclease Y (523 aa).

Residues 28 to 48 (TYYIVATIIIAVIAVYVDYYI) form a helical membrane-spanning segment. Positions 227–312 (TVYVVNLPND…EMVEKAKKEV (86 aa)) constitute a KH domain. Positions 353 to 446 (VLKHSIEVSY…VQAADAISAA (94 aa)) constitute an HD domain.

It belongs to the RNase Y family.

The protein resides in the cell membrane. Endoribonuclease that initiates mRNA decay. This chain is Ribonuclease Y, found in Clostridium tetani (strain Massachusetts / E88).